The chain runs to 179 residues: Alpha-S2-casein-like A (179 aa).

A signal peptide spans 1–15 (MKFFIFTCLVAAALA). Residues Ser24 and Ser25 each carry the phosphoserine modification. Residues 44 to 121 (FQTPQDSASS…NAIYDVPSQE (78 aa)) are disordered. The span at 63–74 (ISEKIEQSEEQK) shows a compositional bias: basic and acidic residues. Residues 93 to 110 (PQICTPYQQQSSVNQRPQ) show a composition bias toward polar residues.

This sequence belongs to the alpha-casein family. As to expression, mammary gland specific. Secreted in milk.

The protein localises to the secreted. In terms of biological role, important role in the capacity of milk to transport calcium phosphate. This Rattus norvegicus (Rat) protein is Alpha-S2-casein-like A (Csn1s2a).